The chain runs to 76 residues: MGACSSCLRLLLDAESDVKIHVIEPTSINNGEGSSVVHRDATAPPTPPVVPTSTLQVPGLQRARTPEPNDPRVANL.

The segment at 27-76 (SINNGEGSSVVHRDATAPPTPPVVPTSTLQVPGLQRARTPEPNDPRVANL) is disordered.

This is an uncharacterized protein from Caenorhabditis elegans.